A 32-amino-acid polypeptide reads, in one-letter code: Lectin (32 aa).

Belongs to the leguminous lectin family. Homotetramer.

Its function is as follows. Metalloglycoprotein, containing Ca, Mg, Mn, and Zn and the carbohydrates galactose, glucosamine, mannose, and fucose. It agglutinates erythrocytes of blood group A1. This is Lectin from Macrotyloma axillare (Perennial horse gram).